The following is a 189-amino-acid chain: Small ribosomal subunit protein uS4 (189 aa).

One can recognise an S4 RNA-binding domain in the interval 107 to 181 (RRLQTQVFKL…VKRRTLRKGD (75 aa)). The disordered stretch occupies residues 161–189 (QSPYGGGRPGRVKRRTLRKGDGAGGDDEE).

The protein belongs to the universal ribosomal protein uS4 family. As to quaternary structure, component of the small ribosomal subunit. Part of the small subunit (SSU) processome, composed of more than 70 proteins and the RNA chaperone small nucleolar RNA (snoRNA) U3.

It localises to the cytoplasm. Its subcellular location is the nucleus. The protein resides in the nucleolus. Its function is as follows. Component of the small ribosomal subunit. The ribosome is a large ribonucleoprotein complex responsible for the synthesis of proteins in the cell. Part of the small subunit (SSU) processome, first precursor of the small eukaryotic ribosomal subunit. During the assembly of the SSU processome in the nucleolus, many ribosome biogenesis factors, an RNA chaperone and ribosomal proteins associate with the nascent pre-rRNA and work in concert to generate RNA folding, modifications, rearrangements and cleavage as well as targeted degradation of pre-ribosomal RNA by the RNA exosome. The polypeptide is Small ribosomal subunit protein uS4 (rps-9) (Caenorhabditis elegans).